The primary structure comprises 677 residues: Protein hook (677 aa).

In terms of domain architecture, Calponin-homology (CH) spans 6–123; that stretch reads NEMYYSLLEW…RLLQLVLGCA (118 aa). Coiled-coil stretches lie at residues 135-436 and 478-588; these read EIMC…KCGH and QTAL…AKEV.

This sequence belongs to the hook family. In terms of assembly, homodimer. Interacts with microtubules via its N-terminus.

It is found in the cytoplasm. Its subcellular location is the cytoskeleton. It localises to the endosome. The protein resides in the synapse. Involved in endocytic trafficking by stabilizing organelles of the endocytic pathway. Probably acts as a cytoskeletal linker protein required to tether endosome vesicles to the cytoskeleton. Involved in modulation of endocytosis at stages required for down-regulation of membrane proteins that control synapse size. Not involved in synaptic vesicle recycling. Required in R7 cells for boss endocytosis into multivesicular bodies (MVBs). Has a role in regulating adult longevity. This is Protein hook from Drosophila persimilis (Fruit fly).